A 264-amino-acid chain; its full sequence is Agamous-like MADS-box protein AGL61 (264 aa).

An MADS-box domain is found at 62–122; that stretch reads IGRQKIPMVK…KKPFSFGHPS (61 aa).

As to quaternary structure, interacts with PHE1/AGL37, PHE2/AGL38, AGL80 and AGL86. Forms a heterodimer with AGL80. In terms of tissue distribution, expressed exclusively in the central cell of the female gametophyte and in early endosperm.

It is found in the nucleus. Probable transcription factor. Controls central cell differentiation during female gametophyte development. The polypeptide is Agamous-like MADS-box protein AGL61 (AGL61) (Arabidopsis thaliana (Mouse-ear cress)).